The following is a 265-amino-acid chain: Neuronal membrane glycoprotein M6-b (265 aa).

The chain crosses the membrane as a helical span at residues 31-51; that stretch reads GGVPYASLVATILCFSGVALF. N73 is a glycosylation site (N-linked (GlcNAc...) asparagine). Helical transmembrane passes span 90–110 and 136–156; these read VIYGIASFFFLYGIILLAEGF and FVFLTYVLGVAWLGVFGFSAV. N177 is a glycosylation site (N-linked (GlcNAc...) asparagine). The helical transmembrane segment at 224-244 threads the bilayer; that stretch reads LFIVACAGAGATVIALLIYMM. Residue S257 is modified to Phosphoserine.

The protein belongs to the myelin proteolipid protein family. As to quaternary structure, interacts with SERT. As to expression, highly expressed in the ventral medullary surface, moderately in the cerebral cortex and cerebellum, poorly in lung and kidney, and not at all in heart, skeletal muscle, liver, stomach or stomach.

It localises to the membrane. The protein resides in the cell membrane. May be involved in neural development. Involved in regulation of osteoblast function and bone formation. Involved in matrix vesicle release by osteoblasts; this function seems to involve maintenance of the actin cytoskeleton. May be involved in cellular trafficking of SERT and thereby in regulation of serotonin uptake. In Rattus norvegicus (Rat), this protein is Neuronal membrane glycoprotein M6-b (Gpm6b).